Consider the following 202-residue polypeptide: Orotate phosphoribosyltransferase (202 aa).

5-phospho-alpha-D-ribose 1-diphosphate contacts are provided by residues Lys93 and Glu113–Ser121. 2 residues coordinate orotate: Thr117 and Arg145.

Belongs to the purine/pyrimidine phosphoribosyltransferase family. PyrE subfamily. In terms of assembly, homodimer. Mg(2+) is required as a cofactor.

The enzyme catalyses orotidine 5'-phosphate + diphosphate = orotate + 5-phospho-alpha-D-ribose 1-diphosphate. Its pathway is pyrimidine metabolism; UMP biosynthesis via de novo pathway; UMP from orotate: step 1/2. Its function is as follows. Catalyzes the transfer of a ribosyl phosphate group from 5-phosphoribose 1-diphosphate to orotate, leading to the formation of orotidine monophosphate (OMP). The sequence is that of Orotate phosphoribosyltransferase from Campylobacter hominis (strain ATCC BAA-381 / DSM 21671 / CCUG 45161 / LMG 19568 / NCTC 13146 / CH001A).